Reading from the N-terminus, the 561-residue chain is Long-chain-fatty-acid--CoA ligase (561 aa).

213-224 (YTGGTTGVAKGA) serves as a coordination point for ATP.

Belongs to the ATP-dependent AMP-binding enzyme family. Requires Mg(2+) as cofactor.

It is found in the membrane. It catalyses the reaction a long-chain fatty acid + ATP + CoA = a long-chain fatty acyl-CoA + AMP + diphosphate. Its pathway is lipid metabolism; fatty acid beta-oxidation. Its function is as follows. Catalyzes the esterification, concomitant with transport, of exogenous long-chain fatty acids into metabolically active CoA thioesters for subsequent degradation or incorporation into phospholipids. The polypeptide is Long-chain-fatty-acid--CoA ligase (fadD) (Escherichia coli O6:H1 (strain CFT073 / ATCC 700928 / UPEC)).